The sequence spans 41 residues: Large ribosomal subunit protein bL36 (41 aa).

This sequence belongs to the bacterial ribosomal protein bL36 family.

In Bartonella quintana (strain Toulouse) (Rochalimaea quintana), this protein is Large ribosomal subunit protein bL36.